Reading from the N-terminus, the 872-residue chain is DNA mismatch repair protein MutS (872 aa).

Gly602–Ser609 contributes to the ATP binding site.

The protein belongs to the DNA mismatch repair MutS family.

This protein is involved in the repair of mismatches in DNA. It is possible that it carries out the mismatch recognition step. This protein has a weak ATPase activity. In Staphylococcus aureus (strain bovine RF122 / ET3-1), this protein is DNA mismatch repair protein MutS.